The sequence spans 395 residues: Imidazolonepropionase (395 aa).

Residues His-63 and His-65 each coordinate Fe(3+). Residues His-63 and His-65 each coordinate Zn(2+). Residues Arg-72, Tyr-135, and His-168 each contribute to the 4-imidazolone-5-propanoate site. Tyr-135 is an N-formimidoyl-L-glutamate binding site. His-233 contacts Fe(3+). Position 233 (His-233) interacts with Zn(2+). Gln-236 contributes to the 4-imidazolone-5-propanoate binding site. Residue Asp-308 coordinates Fe(3+). Residue Asp-308 coordinates Zn(2+). Asn-310 and Gly-312 together coordinate N-formimidoyl-L-glutamate. Thr-313 provides a ligand contact to 4-imidazolone-5-propanoate.

Belongs to the metallo-dependent hydrolases superfamily. HutI family. Zn(2+) serves as cofactor. Fe(3+) is required as a cofactor.

Its subcellular location is the cytoplasm. It catalyses the reaction 4-imidazolone-5-propanoate + H2O = N-formimidoyl-L-glutamate. The protein operates within amino-acid degradation; L-histidine degradation into L-glutamate; N-formimidoyl-L-glutamate from L-histidine: step 3/3. Catalyzes the hydrolytic cleavage of the carbon-nitrogen bond in imidazolone-5-propanoate to yield N-formimidoyl-L-glutamate. It is the third step in the universal histidine degradation pathway. In Cereibacter sphaeroides (strain KD131 / KCTC 12085) (Rhodobacter sphaeroides), this protein is Imidazolonepropionase.